The primary structure comprises 471 residues: RuvB-like protein 2 (471 aa).

75-82 (GPPSTGKT) contacts ATP.

Belongs to the RuvB family. As to quaternary structure, probably forms a homohexamer. Interacts with RVB1 and may form heterododecamers with RVB1. Component of the SWR1 chromatin remodeling complex composed of at least ACT1, ARP4, RVB1, RVB2, ARP6, YAF9, VPS71, VPS72, SWC3, SWC4, SWC5, SWC7 and SWR1, and perhaps BDF1. Component of the chromatin-remodeling INO80 complex, at least composed of ARP4, ARP5, ARP8, RVB1, RVB2, TAF14, NHP10, IES1, IES3, IES4, IES6, ACT1, IES2, IES5 and INO80. Also belongs to the R2TP complex composed of at least RVB1, RVB2, TAH1 and PIH1. Interacts with SPT15/TBP.

It localises to the nucleus. Its subcellular location is the nucleoplasm. It catalyses the reaction ATP + H2O = ADP + phosphate + H(+). DNA helicase which participates in several chromatin remodeling complexes, including the SWR1 and the INO80 complexes. The SWR1 complex mediates the ATP-dependent exchange of histone H2A for the H2A variant HZT1 leading to transcriptional regulation of selected genes by chromatin remodeling. The INO80 complex remodels chromatin by shifting nucleosomes. Its ability to induce transcription of some phosphate-responsive genes is modulated by inositol polyphosphates. The INO80 complex is involved in DNA repair by associating to 'Ser-129' phosphorylated H2A histones as a response to DNA damage. During transcription may recruit SPT15/TBP to the TATA-boxes of involved genes. Required for box C/D and box H/ACA snoRNA accumulation and involved in pre-rRNA processing. The protein is RuvB-like protein 2 (RVB2) of Saccharomyces cerevisiae (strain ATCC 204508 / S288c) (Baker's yeast).